The following is a 367-amino-acid chain: MTAFKRIFSPALLVLALYGGAAHAALVPPQGYYEGIEKIKTSDGNFRCESAPKPFTGALQFRSKYEGSDKARATLNRDSEQAFRDSTKDITTLERGVAKMVNQYMRDGRPAQLDCTLTWLGTWARADALMSTNYNHTGKSMRKWALGSMSGSWLRLKFSNSQPLAAHQAEAELIEKWFARLAEQTVRDWSNLPLEKINNHSYWAAWSVMATAVATDRRDLFDWAVKEYKVGANQIDDQGFLPNEIKRKQRALAYHNYALPPLAMIASFAKANGVDLRSENNFALQRLGEGVLYGARDPRHFAERAGEKQDMKDLKVDGKYAWLEPWCALYQCVGDTLERKHRMQPFDSFRLGGNLTRVYDPSAQSKK.

A signal peptide spans 1 to 24; the sequence is MTAFKRIFSPALLVLALYGGAAHA. Substrate contacts are provided by residues 63 to 64, 136 to 137, and Tyr254; these read SK and HT.

It belongs to the polysaccharide lyase 5 family.

The protein localises to the periplasm. It catalyses the reaction Eliminative cleavage of alginate to give oligosaccharides with 4-deoxy-alpha-L-erythro-hex-4-enuronosyl groups at their non-reducing ends and beta-D-mannuronate at their reducing end.. Its function is as follows. Catalyzes the depolymerization of alginate by cleaving the beta-1,4 glycosidic bond between two adjacent sugar residues via a beta-elimination mechanism. May serve to degrade mislocalized alginate that is trapped in the periplasmic space. The chain is Alginate lyase from Pseudomonas putida (strain W619).